We begin with the raw amino-acid sequence, 397 residues long: Enoyl-[acyl-carrier-protein] reductase [NADH] (397 aa).

NAD(+) contacts are provided by residues 48 to 53 (GASTGY), 74 to 75 (FE), 111 to 112 (DA), and 139 to 140 (VA). Tyr-225 provides a ligand contact to substrate. Catalysis depends on Tyr-235, which acts as the Proton donor. Residues Lys-244 and 273–275 (VVT) each bind NAD(+).

Belongs to the TER reductase family. As to quaternary structure, monomer.

It carries out the reaction a 2,3-saturated acyl-[ACP] + NAD(+) = a (2E)-enoyl-[ACP] + NADH + H(+). The protein operates within lipid metabolism; fatty acid biosynthesis. Functionally, involved in the final reduction of the elongation cycle of fatty acid synthesis (FAS II). Catalyzes the reduction of a carbon-carbon double bond in an enoyl moiety that is covalently linked to an acyl carrier protein (ACP). In Burkholderia mallei (strain NCTC 10247), this protein is Enoyl-[acyl-carrier-protein] reductase [NADH].